The chain runs to 139 residues: uncharacterized protein (139 aa).

The HTH cro/C1-type domain maps to 19–73 (IRLRRTMLGMSQEKLGESLGITFQQIQKYEKGTNRVGASRLQNISQILNVPVSFF). Positions 30–49 (QEKLGESLGITFQQIQKYEK) form a DNA-binding region, H-T-H motif.

This is an uncharacterized protein from Rhizobium meliloti (strain 1021) (Ensifer meliloti).